Here is a 423-residue protein sequence, read N- to C-terminus: 58 kDa phosphoprotein (423 aa).

Basic and acidic residues predominate over residues Lys46 to Glu60. The interval Lys46–Glu82 is disordered. Residues Lys61–Glu82 are compositionally biased toward acidic residues. TPR repeat units lie at residues Ile113–Ser146, Ala147–Ser180, and Ala181–Glu214. The disordered stretch occupies residues Lys260–Gly301. Basic and acidic residues predominate over residues Glu264–Tyr276. A 19 X 3-4 AA approximate repeats region spans residues Gly292 to Pro362. Residues Met361–Pro423 form the STI1 domain.

It localises to the cytoplasm. In terms of biological role, may play a role in protein folding or protein-protein interactions. May act as a co-chaperone. This Plasmodium berghei protein is 58 kDa phosphoprotein.